The chain runs to 132 residues: D-ribose pyranase (132 aa).

His-20 (proton donor) is an active-site residue. Substrate contacts are provided by residues Asp-28, His-99, and 121-123; that span reads YSN.

It belongs to the RbsD / FucU family. RbsD subfamily. Homodecamer.

Its subcellular location is the cytoplasm. It carries out the reaction beta-D-ribopyranose = beta-D-ribofuranose. It participates in carbohydrate metabolism; D-ribose degradation; D-ribose 5-phosphate from beta-D-ribopyranose: step 1/2. Catalyzes the interconversion of beta-pyran and beta-furan forms of D-ribose. This chain is D-ribose pyranase, found in Lactococcus lactis subsp. cremoris (strain MG1363).